Consider the following 661-residue polypeptide: UvrABC system protein B (661 aa).

The Helicase ATP-binding domain occupies E25 to M178. Residue G38–T45 coordinates ATP. A Beta-hairpin motif is present at residues Y91–I114. A Helicase C-terminal domain is found at Q429–I591. The 36-residue stretch at E625–L660 folds into the UVR domain.

The protein belongs to the UvrB family. In terms of assembly, forms a heterotetramer with UvrA during the search for lesions. Interacts with UvrC in an incision complex.

Its subcellular location is the cytoplasm. The UvrABC repair system catalyzes the recognition and processing of DNA lesions. A damage recognition complex composed of 2 UvrA and 2 UvrB subunits scans DNA for abnormalities. Upon binding of the UvrA(2)B(2) complex to a putative damaged site, the DNA wraps around one UvrB monomer. DNA wrap is dependent on ATP binding by UvrB and probably causes local melting of the DNA helix, facilitating insertion of UvrB beta-hairpin between the DNA strands. Then UvrB probes one DNA strand for the presence of a lesion. If a lesion is found the UvrA subunits dissociate and the UvrB-DNA preincision complex is formed. This complex is subsequently bound by UvrC and the second UvrB is released. If no lesion is found, the DNA wraps around the other UvrB subunit that will check the other stand for damage. This chain is UvrABC system protein B, found in Caldicellulosiruptor bescii (strain ATCC BAA-1888 / DSM 6725 / KCTC 15123 / Z-1320) (Anaerocellum thermophilum).